The chain runs to 57 residues: Large ribosomal subunit protein uL30 (57 aa).

This sequence belongs to the universal ribosomal protein uL30 family. In terms of assembly, part of the 50S ribosomal subunit.

This Clostridium acetobutylicum (strain ATCC 824 / DSM 792 / JCM 1419 / IAM 19013 / LMG 5710 / NBRC 13948 / NRRL B-527 / VKM B-1787 / 2291 / W) protein is Large ribosomal subunit protein uL30.